The primary structure comprises 249 residues: Probable septum site-determining protein MinC (249 aa).

The segment at 89–130 is disordered; it reads SLFEPGMPPAMKGGRPAPDFEVPEVDPADPPKAGKGKAAAPI. Low complexity predominate over residues 119–129; it reads PKAGKGKAAAP.

This sequence belongs to the MinC family. In terms of assembly, interacts with MinD and FtsZ.

Its function is as follows. Cell division inhibitor that blocks the formation of polar Z ring septums. Rapidly oscillates between the poles of the cell to destabilize FtsZ filaments that have formed before they mature into polar Z rings. Prevents FtsZ polymerization. The protein is Probable septum site-determining protein MinC of Rhizobium meliloti (strain 1021) (Ensifer meliloti).